The primary structure comprises 368 residues: Phospho-N-acetylmuramoyl-pentapeptide-transferase (368 aa).

10 consecutive transmembrane segments (helical) span residues 31–51 (LTSMLVTFWFGHKIIDFLYGL), 73–93 (TMGGLLIIGSLLISVLLWGNL), 98–118 (VILLSVFSLSFSVLGFADDYM), 134–154 (FILSILISFIFCILFFYYTGT), 175–195 (GPVIALGIIAIPFSILVIIGS), 213–233 (VLISVMTLGVIAYFSGTPIVA), 249–269 (VFLSALTGALFGFLWFNAHPA), 271–291 (VFMGDTGSLFLGATLGMIVIL), 296–316 (ILLLILGAIFVSEALSVILQV), and 345–365 (KIVIRFWIIAVILAIISLSTL).

This sequence belongs to the glycosyltransferase 4 family. MraY subfamily. Mg(2+) is required as a cofactor.

The protein localises to the cell inner membrane. The catalysed reaction is UDP-N-acetyl-alpha-D-muramoyl-L-alanyl-gamma-D-glutamyl-meso-2,6-diaminopimeloyl-D-alanyl-D-alanine + di-trans,octa-cis-undecaprenyl phosphate = di-trans,octa-cis-undecaprenyl diphospho-N-acetyl-alpha-D-muramoyl-L-alanyl-D-glutamyl-meso-2,6-diaminopimeloyl-D-alanyl-D-alanine + UMP. Its pathway is cell wall biogenesis; peptidoglycan biosynthesis. Its function is as follows. Catalyzes the initial step of the lipid cycle reactions in the biosynthesis of the cell wall peptidoglycan: transfers peptidoglycan precursor phospho-MurNAc-pentapeptide from UDP-MurNAc-pentapeptide onto the lipid carrier undecaprenyl phosphate, yielding undecaprenyl-pyrophosphoryl-MurNAc-pentapeptide, known as lipid I. The sequence is that of Phospho-N-acetylmuramoyl-pentapeptide-transferase from Leptospira interrogans serogroup Icterohaemorrhagiae serovar copenhageni (strain Fiocruz L1-130).